A 96-amino-acid polypeptide reads, in one-letter code: ATP synthase subunit c (96 aa).

The next 2 membrane-spanning stretches (helical) occupy residues 24 to 44 and 75 to 95; these read HVGA…VGVG and AIAE…IFVA.

The protein belongs to the ATPase C chain family. As to quaternary structure, F-type ATPases have 2 components, F(1) - the catalytic core - and F(0) - the membrane proton channel. F(1) has five subunits: alpha(3), beta(3), gamma(1), delta(1), epsilon(1). F(0) has three main subunits: a(1), b(2) and c(10-14). The alpha and beta chains form an alternating ring which encloses part of the gamma chain. F(1) is attached to F(0) by a central stalk formed by the gamma and epsilon chains, while a peripheral stalk is formed by the delta and b chains.

It is found in the cell membrane. Functionally, f(1)F(0) ATP synthase produces ATP from ADP in the presence of a proton or sodium gradient. F-type ATPases consist of two structural domains, F(1) containing the extramembraneous catalytic core and F(0) containing the membrane proton channel, linked together by a central stalk and a peripheral stalk. During catalysis, ATP synthesis in the catalytic domain of F(1) is coupled via a rotary mechanism of the central stalk subunits to proton translocation. Key component of the F(0) channel; it plays a direct role in translocation across the membrane. A homomeric c-ring of between 10-14 subunits forms the central stalk rotor element with the F(1) delta and epsilon subunits. The sequence is that of ATP synthase subunit c from Mycoplasmoides gallisepticum (strain R(low / passage 15 / clone 2)) (Mycoplasma gallisepticum).